A 313-amino-acid chain; its full sequence is UDP-N-acetylenolpyruvoylglucosamine reductase (313 aa).

An FAD-binding PCMH-type domain is found at 31 to 207 (VGGPADALVA…TGVDLGLGFD (177 aa)). Arg180 is an active-site residue. The Proton donor role is filled by Cys236. Glu307 is a catalytic residue.

This sequence belongs to the MurB family. FAD serves as cofactor.

It localises to the cytoplasm. It carries out the reaction UDP-N-acetyl-alpha-D-muramate + NADP(+) = UDP-N-acetyl-3-O-(1-carboxyvinyl)-alpha-D-glucosamine + NADPH + H(+). It participates in cell wall biogenesis; peptidoglycan biosynthesis. Functionally, cell wall formation. The chain is UDP-N-acetylenolpyruvoylglucosamine reductase from Desulfosudis oleivorans (strain DSM 6200 / JCM 39069 / Hxd3) (Desulfococcus oleovorans).